A 943-amino-acid chain; its full sequence is Translation initiation factor IF-2 (943 aa).

Over residues 99–113 (VKAAQTQAAPVQPEQ) the composition is skewed to low complexity. A disordered region spans residues 99–354 (VKAAQTQAAP…LEPNQHAFQA (256 aa)). Positions 117-141 (DAVKARAEAAARAEARAKAEAEAAK) are enriched in basic and acidic residues. Residues 145–172 (AKAGNKAKPAAQKPTEAKAETAPVAAET) show a composition bias toward low complexity. Residues 173-197 (KPAEPKEKAVKPKHERNGKGKDAKK) show a composition bias toward basic and acidic residues. Residues 200–215 (KPAAPAVPQPVVSAEE) show a composition bias toward low complexity. Residues 216-250 (QAQRDEEARRAAALRAHQEALLKEKQERQARREAM) are compositionally biased toward basic and acidic residues. The segment covering 251–264 (KQQAEQQAKAAQEA) has biased composition (low complexity). Composition is skewed to basic and acidic residues over residues 295-308 (AKKEDRRNRDDEGQ) and 319-335 (GGRDRNNARNGGDERVR). Residues 443 to 612 (PRPPVVTVMG…LLEAEVLELT (170 aa)) form the tr-type G domain. The tract at residues 452–459 (GHVDHGKT) is G1. 452 to 459 (GHVDHGKT) is a GTP binding site. A G2 region spans residues 477–481 (GITQH). Residues 498–501 (DTPG) are G3. GTP is bound by residues 498 to 502 (DTPGH) and 552 to 555 (NKID). The tract at residues 552–555 (NKID) is G4. The tract at residues 588 to 590 (SAK) is G5.

Belongs to the TRAFAC class translation factor GTPase superfamily. Classic translation factor GTPase family. IF-2 subfamily.

It localises to the cytoplasm. Functionally, one of the essential components for the initiation of protein synthesis. Protects formylmethionyl-tRNA from spontaneous hydrolysis and promotes its binding to the 30S ribosomal subunits. Also involved in the hydrolysis of GTP during the formation of the 70S ribosomal complex. This chain is Translation initiation factor IF-2, found in Neisseria gonorrhoeae (strain ATCC 700825 / FA 1090).